Here is a 228-residue protein sequence, read N- to C-terminus: Delta-type opioid receptor (228 aa).

A helical membrane pass occupies residues G1–V3. The Cytoplasmic segment spans residues R4–N13. The helical transmembrane segment at I14–L38 threads the bilayer. Over M39–K50 the chain is Extracellular. The cysteines at positions 49 and 126 are disulfide-linked. The helical transmembrane segment at A51–V72 threads the bilayer. Residues D73 to A91 lie on the Cytoplasmic side of the membrane. A helical membrane pass occupies residues K92–M114. Residues A115 to S134 lie on the Extracellular side of the membrane. A helical transmembrane segment spans residues W135–L166. At R167–R189 the chain is on the cytoplasmic side. Residues M190–W212 traverse the membrane as a helical segment. The Extracellular portion of the chain corresponds to T213 to A227.

The protein belongs to the G-protein coupled receptor 1 family. As to quaternary structure, may form homooligomers. Forms a heterodimer with OPRM1. Interacts with GPRASP1. Interacts with RTP4; the interaction promotes cell surface localization of the OPRD1-OPRM1 heterodimer. Ubiquitinated. A basal ubiquitination seems not to be related to degradation. Ubiquitination is increased upon formation of OPRM1:OPRD1 oligomers leading to proteasomal degradation; the ubiquitination is diminished by RTP4. As to expression, detected in myenteric plexus and smooth muscle (at protein level). Detected in brain and intestine.

The protein localises to the cell membrane. Functionally, G-protein coupled receptor that functions as a receptor for endogenous enkephalins and for a subset of other opioids. Ligand binding causes a conformation change that triggers signaling via guanine nucleotide-binding proteins (G proteins) and modulates the activity of down-stream effectors, such as adenylate cyclase. Signaling leads to the inhibition of adenylate cyclase activity. Inhibits neurotransmitter release by reducing calcium ion currents and increasing potassium ion conductance. Plays a role in the perception of pain and in opiate-mediated analgesia. Plays a role in developing analgesic tolerance to morphine. The sequence is that of Delta-type opioid receptor (OPRD1) from Sus scrofa (Pig).